Reading from the N-terminus, the 1306-residue chain is Putative late blight resistance protein homolog R1A-10 (1306 aa).

2 coiled-coil regions span residues 407-428 (SDSLAFLKNQLQVIQTEFESLQ) and 520-542 (PRMKEEIVGFEDVIENLRKKLLS). Positions 521–808 (RMKEEIVGFE…SEAFIKSSEG (288 aa)) constitute an NB-ARC domain. Residue 554-561 (GMPGLGKT) participates in ATP binding. LRR repeat units follow at residues 858–881 (AEENFLLWINRDQITKPSSCVYSH), 921–935 (LSSLHDFSISRILPN), 936–961 (FKFLKVLDLEHRVFIDFIPTELPYLR), 979–1007 (LWNLETLILNRRSADSHNRVLLPSTVWDM), 1010–1035 (LRHLHIPNFSPENKKALLKNSPNLDD), 1057–1081 (TPNLRKLTCKVKCLEYLHQYHALNF), 1082–1106 (PIRLEILKLYRSNAFKAIPFCISAP), 1110–1129 (YLKLSGFYLDSQYLSKTADH), 1130–1153 (LKNLEVLKLYYVEFGDHREWKVSN), 1156–1181 (FPQLKILKLEDVSLMKWIVADDAFPN), and 1216–1240 (ESVVKSAMNIQETQVEDYQNTNFKL). The 67-residue stretch at 1240–1306 (LVLIEKWPKF…KLRKCGMPGL (67 aa)) folds into the HMA domain.

This sequence belongs to the disease resistance NB-LRR family.

The protein localises to the cytoplasm. It is found in the membrane. Functionally, confers resistance to late blight (Phytophthora infestans) races carrying the avirulence gene Avr1. Resistance proteins guard the plant against pathogens that contain an appropriate avirulence protein via an indirect interaction with this avirulence protein. That triggers a defense system including the hypersensitive response, which restricts the pathogen growth. This is Putative late blight resistance protein homolog R1A-10 (R1A-10) from Solanum demissum (Wild potato).